The primary structure comprises 759 residues: Protein transport protein sec23-1 (759 aa).

Zn(2+) is bound by residues Cys56, Cys60, Cys79, and Cys82.

Belongs to the SEC23/SEC24 family. SEC23 subfamily. The COPII coat is composed of at least 5 proteins: the sec23/24 complex, the sec13/31 complex, and the protein sar1.

The protein localises to the cytoplasm. It localises to the cytoplasmic vesicle. It is found in the COPII-coated vesicle membrane. Its subcellular location is the endoplasmic reticulum membrane. The protein resides in the golgi apparatus membrane. In terms of biological role, component of the coat protein complex II (COPII) which promotes the formation of transport vesicles from the endoplasmic reticulum (ER). The coat has two main functions, the physical deformation of the endoplasmic reticulum membrane into vesicles and the selection of cargo molecules. This is Protein transport protein sec23-1 (sec231) from Schizosaccharomyces pombe (strain 972 / ATCC 24843) (Fission yeast).